The following is a 564-amino-acid chain: Pyruvate decarboxylase (564 aa).

Asp-28 and His-115 together coordinate pyruvate. Thiamine diphosphate is bound by residues Thr-390 and 413–415 (GSI). Asp-444 serves as a coordination point for Mg(2+). Thiamine diphosphate is bound by residues 445–446 (GS) and 471–476 (NDGYTI). 2 residues coordinate Mg(2+): Asn-471 and Gly-473. Pyruvate is bound at residue Glu-477.

The protein belongs to the TPP enzyme family. In terms of assembly, homotetramer. Mg(2+) serves as cofactor. Thiamine diphosphate is required as a cofactor.

It carries out the reaction a 2-oxocarboxylate + H(+) = an aldehyde + CO2. The enzyme catalyses pyruvate + H(+) = acetaldehyde + CO2. This chain is Pyruvate decarboxylase (PDC1), found in Candida glabrata (strain ATCC 2001 / BCRC 20586 / JCM 3761 / NBRC 0622 / NRRL Y-65 / CBS 138) (Yeast).